We begin with the raw amino-acid sequence, 564 residues long: Pyruvate decarboxylase (564 aa).

Pyruvate contacts are provided by aspartate 28 and histidine 115. Thiamine diphosphate is bound by residues threonine 390 and 413 to 415; that span reads GSI. Aspartate 444 contributes to the Mg(2+) binding site. Thiamine diphosphate-binding positions include 445-446 and 471-476; these read GS and NDGYTI. Asparagine 471 and glycine 473 together coordinate Mg(2+). Glutamate 477 contributes to the pyruvate binding site.

It belongs to the TPP enzyme family. As to quaternary structure, homotetramer. Mg(2+) serves as cofactor. Thiamine diphosphate is required as a cofactor.

It catalyses the reaction a 2-oxocarboxylate + H(+) = an aldehyde + CO2. It carries out the reaction pyruvate + H(+) = acetaldehyde + CO2. The protein is Pyruvate decarboxylase (PDC1) of Candida glabrata (strain ATCC 2001 / BCRC 20586 / JCM 3761 / NBRC 0622 / NRRL Y-65 / CBS 138) (Yeast).